The primary structure comprises 252 residues: uncharacterized protein (252 aa).

The first 25 residues, 1 to 25 (MRKKKFLSRFAFGSLFLLCGTILSA), serve as a signal peptide directing secretion. C26 carries the N-palmitoyl cysteine lipid modification. The S-diacylglycerol cysteine moiety is linked to residue C26.

Belongs to the MG439/MG440 family.

The protein resides in the cell membrane. This is an uncharacterized protein from Mycoplasma pneumoniae (strain ATCC 29342 / M129 / Subtype 1) (Mycoplasmoides pneumoniae).